The primary structure comprises 263 residues: 3-methyl-2-oxobutanoate hydroxymethyltransferase (263 aa).

Residues Asp-44 and Asp-83 each coordinate Mg(2+). 3-methyl-2-oxobutanoate contacts are provided by residues 44-45 (DS), Asp-83, and Lys-112. A Mg(2+)-binding site is contributed by Glu-114. Glu-181 serves as the catalytic Proton acceptor.

The protein belongs to the PanB family. As to quaternary structure, homodecamer; pentamer of dimers. The cofactor is Mg(2+).

Its subcellular location is the cytoplasm. The enzyme catalyses 3-methyl-2-oxobutanoate + (6R)-5,10-methylene-5,6,7,8-tetrahydrofolate + H2O = 2-dehydropantoate + (6S)-5,6,7,8-tetrahydrofolate. It functions in the pathway cofactor biosynthesis; (R)-pantothenate biosynthesis; (R)-pantoate from 3-methyl-2-oxobutanoate: step 1/2. Catalyzes the reversible reaction in which hydroxymethyl group from 5,10-methylenetetrahydrofolate is transferred onto alpha-ketoisovalerate to form ketopantoate. The sequence is that of 3-methyl-2-oxobutanoate hydroxymethyltransferase from Sulfurimonas denitrificans (strain ATCC 33889 / DSM 1251) (Thiomicrospira denitrificans (strain ATCC 33889 / DSM 1251)).